Consider the following 658-residue polypeptide: Threonine--tRNA ligase (658 aa).

The TGS domain occupies 1 to 63 (MDQITITFPD…DDNASIDFVA (63 aa)). The tract at residues 245-548 (DHRKLGRELD…LIEHYAGNFP (304 aa)) is catalytic. Zn(2+) contacts are provided by cysteine 341, histidine 392, and histidine 525.

The protein belongs to the class-II aminoacyl-tRNA synthetase family. In terms of assembly, homodimer. The cofactor is Zn(2+).

Its subcellular location is the cytoplasm. The enzyme catalyses tRNA(Thr) + L-threonine + ATP = L-threonyl-tRNA(Thr) + AMP + diphosphate + H(+). Functionally, catalyzes the attachment of threonine to tRNA(Thr) in a two-step reaction: L-threonine is first activated by ATP to form Thr-AMP and then transferred to the acceptor end of tRNA(Thr). Also edits incorrectly charged L-seryl-tRNA(Thr). The polypeptide is Threonine--tRNA ligase (Rhodopseudomonas palustris (strain ATCC BAA-98 / CGA009)).